Consider the following 869-residue polypeptide: Probable beta-glucosidase F (869 aa).

An N-terminal signal peptide occupies residues 1-19 (MRVLSAIALVASLASSALS). N77 and N261 each carry an N-linked (GlcNAc...) asparagine glycan. Residue D289 is part of the active site. N332, N364, N399, and N478 each carry an N-linked (GlcNAc...) asparagine glycan. Positions 677-697 (STYPPTRPPKGPTPTYPTAIP) are disordered. Pro residues predominate over residues 681–691 (PTRPPKGPTPT). N728 is a glycosylation site (N-linked (GlcNAc...) asparagine).

The protein belongs to the glycosyl hydrolase 3 family.

The protein localises to the secreted. The enzyme catalyses Hydrolysis of terminal, non-reducing beta-D-glucosyl residues with release of beta-D-glucose.. It participates in glycan metabolism; cellulose degradation. In terms of biological role, beta-glucosidases are one of a number of cellulolytic enzymes involved in the degradation of cellulosic biomass. Catalyzes the last step releasing glucose from the inhibitory cellobiose. This is Probable beta-glucosidase F (bglF) from Aspergillus fumigatus (strain ATCC MYA-4609 / CBS 101355 / FGSC A1100 / Af293) (Neosartorya fumigata).